The primary structure comprises 442 residues: Serine--tRNA ligase (442 aa).

Residue 244–246 (TAE) coordinates L-serine. ATP is bound at residue 275–277 (RAE). Glu-298 contributes to the L-serine binding site. 365–368 (EISS) provides a ligand contact to ATP. L-serine is bound at residue Ser-400.

It belongs to the class-II aminoacyl-tRNA synthetase family. Type-1 seryl-tRNA synthetase subfamily. Homodimer. The tRNA molecule binds across the dimer.

The protein localises to the cytoplasm. The enzyme catalyses tRNA(Ser) + L-serine + ATP = L-seryl-tRNA(Ser) + AMP + diphosphate + H(+). The catalysed reaction is tRNA(Sec) + L-serine + ATP = L-seryl-tRNA(Sec) + AMP + diphosphate + H(+). Its pathway is aminoacyl-tRNA biosynthesis; selenocysteinyl-tRNA(Sec) biosynthesis; L-seryl-tRNA(Sec) from L-serine and tRNA(Sec): step 1/1. Its function is as follows. Catalyzes the attachment of serine to tRNA(Ser). Is also able to aminoacylate tRNA(Sec) with serine, to form the misacylated tRNA L-seryl-tRNA(Sec), which will be further converted into selenocysteinyl-tRNA(Sec). The protein is Serine--tRNA ligase of Bradyrhizobium sp. (strain ORS 278).